The chain runs to 38 residues: Large ribosomal subunit protein bL36 (38 aa).

Belongs to the bacterial ribosomal protein bL36 family.

In Pseudoalteromonas atlantica (strain T6c / ATCC BAA-1087), this protein is Large ribosomal subunit protein bL36.